The primary structure comprises 427 residues: Phosphatidylinositol 4-phosphate 5-kinase 10 (427 aa).

The 419-residue stretch at 1-419 (MFTREITAKD…RFQDFVSQIF (419 aa)) folds into the PIPK domain. 2 disordered regions span residues 247–287 (SRGS…DSEN) and 334–355 (MKIP…VGKQ). The tract at residues 379-400 (YGVRKRLEHCYKSIQHSSKTIS) is activation loop.

It catalyses the reaction a 1,2-diacyl-sn-glycero-3-phospho-(1D-myo-inositol 4-phosphate) + ATP = a 1,2-diacyl-sn-glycero-3-phospho-(1D-myo-inositol-4,5-bisphosphate) + ADP + H(+). In Arabidopsis thaliana (Mouse-ear cress), this protein is Phosphatidylinositol 4-phosphate 5-kinase 10 (PIP5K10).